Reading from the N-terminus, the 545-residue chain is ATP synthase subunit alpha (545 aa).

Glycine 172–threonine 179 serves as a coordination point for ATP. Residues phenylalanine 511 to glutamine 545 form a disordered region. Residues proline 523–threonine 534 are compositionally biased toward basic and acidic residues. Residues lysine 535–glutamine 545 are compositionally biased toward polar residues.

It belongs to the ATPase alpha/beta chains family. F-type ATPases have 2 components, CF(1) - the catalytic core - and CF(0) - the membrane proton channel. CF(1) has five subunits: alpha(3), beta(3), gamma(1), delta(1), epsilon(1). CF(0) has three main subunits: a(1), b(2) and c(9-12). The alpha and beta chains form an alternating ring which encloses part of the gamma chain. CF(1) is attached to CF(0) by a central stalk formed by the gamma and epsilon chains, while a peripheral stalk is formed by the delta and b chains.

It is found in the cell membrane. It carries out the reaction ATP + H2O + 4 H(+)(in) = ADP + phosphate + 5 H(+)(out). Functionally, produces ATP from ADP in the presence of a proton gradient across the membrane. The alpha chain is a regulatory subunit. This Corynebacterium jeikeium (strain K411) protein is ATP synthase subunit alpha.